Reading from the N-terminus, the 155-residue chain is SsrA-binding protein (155 aa).

Belongs to the SmpB family.

It localises to the cytoplasm. In terms of biological role, required for rescue of stalled ribosomes mediated by trans-translation. Binds to transfer-messenger RNA (tmRNA), required for stable association of tmRNA with ribosomes. tmRNA and SmpB together mimic tRNA shape, replacing the anticodon stem-loop with SmpB. tmRNA is encoded by the ssrA gene; the 2 termini fold to resemble tRNA(Ala) and it encodes a 'tag peptide', a short internal open reading frame. During trans-translation Ala-aminoacylated tmRNA acts like a tRNA, entering the A-site of stalled ribosomes, displacing the stalled mRNA. The ribosome then switches to translate the ORF on the tmRNA; the nascent peptide is terminated with the 'tag peptide' encoded by the tmRNA and targeted for degradation. The ribosome is freed to recommence translation, which seems to be the essential function of trans-translation. This is SsrA-binding protein from Gloeothece citriformis (strain PCC 7424) (Cyanothece sp. (strain PCC 7424)).